A 150-amino-acid polypeptide reads, in one-letter code: Large ribosomal subunit protein bL9 (150 aa).

Belongs to the bacterial ribosomal protein bL9 family.

In terms of biological role, binds to the 23S rRNA. The chain is Large ribosomal subunit protein bL9 from Yersinia enterocolitica serotype O:8 / biotype 1B (strain NCTC 13174 / 8081).